A 163-amino-acid polypeptide reads, in one-letter code: Cyclic pyranopterin monophosphate synthase (163 aa).

Residues leucine 75–histidine 77 and methionine 115–glutamate 116 contribute to the substrate site. Aspartate 130 is an active-site residue.

The protein belongs to the MoaC family. As to quaternary structure, homohexamer; trimer of dimers.

It carries out the reaction (8S)-3',8-cyclo-7,8-dihydroguanosine 5'-triphosphate = cyclic pyranopterin phosphate + diphosphate. It functions in the pathway cofactor biosynthesis; molybdopterin biosynthesis. Catalyzes the conversion of (8S)-3',8-cyclo-7,8-dihydroguanosine 5'-triphosphate to cyclic pyranopterin monophosphate (cPMP). This chain is Cyclic pyranopterin monophosphate synthase, found in Variovorax paradoxus (strain S110).